A 176-amino-acid chain; its full sequence is Methylmalonyl-CoA epimerase, mitochondrial (176 aa).

The transit peptide at 1 to 36 (MARVLKAAAANAVGLFSRLQAPIPTVRASSTSQPLD) directs the protein to the mitochondrion. In terms of domain architecture, VOC spans 47–176 (RLNHVAIAVP…GGVLVELEQA (130 aa)). Histidine 50 serves as a coordination point for Co(2+). Lysine 114 is subject to N6-succinyllysine. Histidine 122 contributes to the Co(2+) binding site. Position 150 is an N6-acetyllysine; alternate (lysine 150). Lysine 150 carries the N6-succinyllysine; alternate modification. Glutamate 172 serves as a coordination point for Co(2+).

The protein belongs to the methylmalonyl-CoA epimerase family.

The protein localises to the mitochondrion. It carries out the reaction (R)-methylmalonyl-CoA = (S)-methylmalonyl-CoA. Its function is as follows. Methylmalonyl-CoA epimerase involved in propionyl-CoA metabolism. The polypeptide is Methylmalonyl-CoA epimerase, mitochondrial (Homo sapiens (Human)).